We begin with the raw amino-acid sequence, 437 residues long: Elongation factor 1-alpha (437 aa).

Residues 4–229 (KPHMNLVVIG…DQLQPPAKPV (226 aa)) form the tr-type G domain. The interval 13 to 20 (GHVDHGKS) is G1. 13–20 (GHVDHGKS) contributes to the GTP binding site. Ser-20 provides a ligand contact to Mg(2+). The segment at 69 to 73 (GITID) is G2. The tract at residues 90 to 93 (DAPG) is G3. Residues 90–94 (DAPGH) and 152–155 (NKMD) each bind GTP. The segment at 152 to 155 (NKMD) is G4. The segment at 193-195 (SAW) is G5.

Belongs to the TRAFAC class translation factor GTPase superfamily. Classic translation factor GTPase family. EF-Tu/EF-1A subfamily.

It localises to the cytoplasm. The enzyme catalyses GTP + H2O = GDP + phosphate + H(+). GTP hydrolase that promotes the GTP-dependent binding of aminoacyl-tRNA to the A-site of ribosomes during protein biosynthesis. The protein is Elongation factor 1-alpha of Aeropyrum pernix (strain ATCC 700893 / DSM 11879 / JCM 9820 / NBRC 100138 / K1).